The chain runs to 276 residues: MLQQDSNDDTEDVSLFDAEEETTNRPRKAKIRHPVASFFHLFFRVSAIIVCLLCELLSSSFITCMVTIILLLSCDFWAVKNVTGRLMVGLRWWNHIDEDGKSHWVFESRKESSQENKTVSEAESRIFWLGLIACSVLWVIFAFSALFSFTVKWLRRSRHIAQTGLKVLGSRDPPASAFQSAGITGVSRCPGHPSRKFHQVDINSFTRITDRALYWKPAPRLSSPPLRAAPGNCQQMAPARLFLSLRLWAWRGGGESPNSRGTGEPGPKFHLASGMH.

M1 is modified (N-acetylmethionine). The interval M1–E21 is disordered. The next 2 helical transmembrane spans lie at L52 to L72 and I126 to L146. Residues G254–H276 are disordered.

The protein belongs to the TVP23 family.

It localises to the membrane. The protein is Golgi apparatus membrane protein TVP23 homolog C (TVP23C) of Homo sapiens (Human).